Reading from the N-terminus, the 456-residue chain is Chromosomal replication initiator protein DnaA (456 aa).

The interval 1–83 is domain I, interacts with DnaA modulators; that stretch reads MKLKILHFTS…DAFEEESNNG (83 aa). Residues 83-116 form a domain II region; the sequence is GVRPEIHIKVKEKKENVKSLKNNKSMLYFNTNGL. Residues 117-331 form a domain III, AAA+ region region; it reads SLNPFYTFEN…GILSTINAHI (215 aa). Positions 161, 163, 164, and 165 each coordinate ATP. A domain IV, binds dsDNA region spans residues 332 to 456; it reads NLSPESSSLK…SKIQQSLDSV (125 aa).

Belongs to the DnaA family. As to quaternary structure, oligomerizes as a right-handed, spiral filament on DNA at oriC.

The protein resides in the cytoplasm. Its function is as follows. Plays an essential role in the initiation and regulation of chromosomal replication. ATP-DnaA binds to the origin of replication (oriC) to initiate formation of the DNA replication initiation complex once per cell cycle. Binds the DnaA box (a 9 base pair repeat at the origin) and separates the double-stranded (ds)DNA. Forms a right-handed helical filament on oriC DNA; dsDNA binds to the exterior of the filament while single-stranded (ss)DNA is stabiized in the filament's interior. The ATP-DnaA-oriC complex binds and stabilizes one strand of the AT-rich DNA unwinding element (DUE), permitting loading of DNA polymerase. After initiation quickly degrades to an ADP-DnaA complex that is not apt for DNA replication. Binds acidic phospholipids. The chain is Chromosomal replication initiator protein DnaA from Helicobacter hepaticus (strain ATCC 51449 / 3B1).